The primary structure comprises 276 residues: MKLCGFEVGLDQPLFLIAGPCVIESMQLQLDVAGKLKEITGKLGVNFIFKSSFDKANRTSGTSFRGPGLEEGLKVLDAVKRQIGVPVLTDVHEYTPMNEVAAVVDVLQTPAFLVRQTDFIKNVCAAGKPVNIKKGQFLAPWDMKPVVDKAKSTGNAQIMVCERGASFGYNNLVSDMRSLSVMRDTGCPVVFDATHSVQLPGGQGSSSGGQREFVPVLARAAVAVGISGLFAETHPDPSKALSDGPNAWPLDRMEELLETLMELDAVTKKHGFARFA.

Belongs to the KdsA family.

It is found in the cytoplasm. The enzyme catalyses D-arabinose 5-phosphate + phosphoenolpyruvate + H2O = 3-deoxy-alpha-D-manno-2-octulosonate-8-phosphate + phosphate. It functions in the pathway carbohydrate biosynthesis; 3-deoxy-D-manno-octulosonate biosynthesis; 3-deoxy-D-manno-octulosonate from D-ribulose 5-phosphate: step 2/3. The protein operates within bacterial outer membrane biogenesis; lipopolysaccharide biosynthesis. This Xanthomonas oryzae pv. oryzae (strain MAFF 311018) protein is 2-dehydro-3-deoxyphosphooctonate aldolase.